An 879-amino-acid polypeptide reads, in one-letter code: Leucine--tRNA ligase (879 aa).

The 'HIGH' region signature appears at 45 to 55 (PYPSGALHMGH). The 'KMSKS' region signature appears at 637–641 (KMSKS). ATP is bound at residue K640.

It belongs to the class-I aminoacyl-tRNA synthetase family.

It is found in the cytoplasm. The enzyme catalyses tRNA(Leu) + L-leucine + ATP = L-leucyl-tRNA(Leu) + AMP + diphosphate. This is Leucine--tRNA ligase from Xylella fastidiosa (strain 9a5c).